Consider the following 219-residue polypeptide: Protein P25 (219 aa).

Residues K57–R62 carry the Nuclear localization signal motif. The tract at residues D103 to F146 is transcription activation. The short motif at V169–V178 is the Nuclear export signal element.

This sequence belongs to the benyvirus P25 protein family. Homooligomer.

Its subcellular location is the host cytoplasm. It is found in the host nucleus. Its function is as follows. Pathogenicity factor implicated in symptom exacerbation. Might function as transcription activator (Potential). The chain is Protein P25 from Beet necrotic yellow vein virus (isolate Japan/S) (BNYVV).